We begin with the raw amino-acid sequence, 185 residues long: Ribosome-recycling factor (185 aa).

The protein belongs to the RRF family.

It localises to the cytoplasm. Responsible for the release of ribosomes from messenger RNA at the termination of protein biosynthesis. May increase the efficiency of translation by recycling ribosomes from one round of translation to another. This chain is Ribosome-recycling factor, found in Nitrosospira multiformis (strain ATCC 25196 / NCIMB 11849 / C 71).